Here is a 183-residue protein sequence, read N- to C-terminus: Putative 3-methyladenine DNA glycosylase (183 aa).

The protein belongs to the DNA glycosylase MPG family.

This is Putative 3-methyladenine DNA glycosylase from Rickettsia conorii (strain ATCC VR-613 / Malish 7).